A 791-amino-acid polypeptide reads, in one-letter code: Penicillin-binding protein 1A (791 aa).

Over 1–6 the chain is Cytoplasmic; the sequence is MYKSLF. A helical; Signal-anchor for type II membrane protein transmembrane segment spans residues 7–27; the sequence is FCLKILALLFLIGCGIVAYII. Topologically, residues 28–791 are periplasmic; it reads YYYSRDLPDY…TEKDQSQEIY (764 aa). Positions 49 to 220 are transglycosylase; sequence TRIYSRDGKL…SELNPEKNYA (172 aa). Glu-87 functions as the Proton donor; for transglycosylase activity in the catalytic mechanism. Positions 398–711 are transpeptidase; sequence DVIVVEPVKD…SSVVLPIFID (314 aa). Residue Ser-457 is the Acyl-ester intermediate; for transpeptidase activity of the active site.

In the N-terminal section; belongs to the glycosyltransferase 51 family. This sequence in the C-terminal section; belongs to the transpeptidase family.

It localises to the cell inner membrane. The enzyme catalyses [GlcNAc-(1-&gt;4)-Mur2Ac(oyl-L-Ala-gamma-D-Glu-L-Lys-D-Ala-D-Ala)](n)-di-trans,octa-cis-undecaprenyl diphosphate + beta-D-GlcNAc-(1-&gt;4)-Mur2Ac(oyl-L-Ala-gamma-D-Glu-L-Lys-D-Ala-D-Ala)-di-trans,octa-cis-undecaprenyl diphosphate = [GlcNAc-(1-&gt;4)-Mur2Ac(oyl-L-Ala-gamma-D-Glu-L-Lys-D-Ala-D-Ala)](n+1)-di-trans,octa-cis-undecaprenyl diphosphate + di-trans,octa-cis-undecaprenyl diphosphate + H(+). The catalysed reaction is Preferential cleavage: (Ac)2-L-Lys-D-Ala-|-D-Ala. Also transpeptidation of peptidyl-alanyl moieties that are N-acyl substituents of D-alanine.. It functions in the pathway cell wall biogenesis; peptidoglycan biosynthesis. In terms of biological role, cell wall formation. Synthesis of cross-linked peptidoglycan from the lipid intermediates. The enzyme has a penicillin-insensitive transglycosylase N-terminal domain (formation of linear glycan strands) and a penicillin-sensitive transpeptidase C-terminal domain (cross-linking of the peptide subunits). The polypeptide is Penicillin-binding protein 1A (mrcA) (Rickettsia bellii (strain RML369-C)).